A 485-amino-acid chain; its full sequence is Glutamate--tRNA ligase 1 (485 aa).

Positions P10–N20 match the 'HIGH' region motif. The 'KMSKS' region signature appears at K252–R256. K255 lines the ATP pocket.

This sequence belongs to the class-I aminoacyl-tRNA synthetase family. Glutamate--tRNA ligase type 1 subfamily. Monomer.

Its subcellular location is the cytoplasm. The catalysed reaction is tRNA(Glu) + L-glutamate + ATP = L-glutamyl-tRNA(Glu) + AMP + diphosphate. In terms of biological role, catalyzes the attachment of glutamate to tRNA(Glu) in a two-step reaction: glutamate is first activated by ATP to form Glu-AMP and then transferred to the acceptor end of tRNA(Glu). The polypeptide is Glutamate--tRNA ligase 1 (Thermoanaerobacter pseudethanolicus (strain ATCC 33223 / 39E) (Clostridium thermohydrosulfuricum)).